Consider the following 115-residue polypeptide: NADH-ubiquinone oxidoreductase chain 3 (115 aa).

Helical transmembrane passes span 3-23 (LILMMILISSLISTILAIVAF), 56-76 (FFLVAILFLLFDLEIALLLPL), and 84-104 (PTLMLMWAFTIIILLTIGLIY).

Belongs to the complex I subunit 3 family.

Its subcellular location is the mitochondrion membrane. The catalysed reaction is a ubiquinone + NADH + 5 H(+)(in) = a ubiquinol + NAD(+) + 4 H(+)(out). Its function is as follows. Core subunit of the mitochondrial membrane respiratory chain NADH dehydrogenase (Complex I) that is believed to belong to the minimal assembly required for catalysis. Complex I functions in the transfer of electrons from NADH to the respiratory chain. The immediate electron acceptor for the enzyme is believed to be ubiquinone. The sequence is that of NADH-ubiquinone oxidoreductase chain 3 (MT-ND3) from Polypterus ornatipinnis (Ornate bichir).